The primary structure comprises 65 residues: Metallothionein-3 (65 aa).

At Met-1 the chain carries N-acetylmethionine. The segment at 1-30 (MDPEACPCPTGGSCTCSDSCKCEGCTCASS) is beta. Residues Cys-6, Cys-8, Cys-14, Cys-16, Cys-20, Cys-22, Cys-25, and Cys-27 each coordinate a divalent metal cation. The alpha stretch occupies residues 31–65 (KKSCCPAECEKCAKDCVCKGGEGAEAEEKKCGCCQ). Ser-33 carries the post-translational modification Phosphoserine. Cys-34, Cys-35, Cys-39, Cys-42, Cys-46, Cys-48, Cys-61, Cys-63, and Cys-64 together coordinate a divalent metal cation.

This sequence belongs to the metallothionein superfamily. Type 1 family.

Functionally, binds heavy metals. Contains five zinc and one copper atoms per polypeptide chain and only a negligible amount of cadmium. This is Metallothionein-3 (MT3) from Ovis aries (Sheep).